A 371-amino-acid polypeptide reads, in one-letter code: tRNA (guanine(26)-N(2))-dimethyltransferase (371 aa).

Residues 1-370 enclose the Trm1 methyltransferase domain; that stretch reads MDVSEGGVTV…GGLAEVEAAV (370 aa). S-adenosyl-L-methionine contacts are provided by Arg36, Arg66, Asp81, Asp107, and Ala108. Zn(2+)-binding residues include Cys238, Cys241, Cys258, and Cys261.

The protein belongs to the class I-like SAM-binding methyltransferase superfamily. Trm1 family.

It catalyses the reaction guanosine(26) in tRNA + 2 S-adenosyl-L-methionine = N(2)-dimethylguanosine(26) in tRNA + 2 S-adenosyl-L-homocysteine + 2 H(+). Functionally, dimethylates a single guanine residue at position 26 of a number of tRNAs using S-adenosyl-L-methionine as donor of the methyl groups. This is tRNA (guanine(26)-N(2))-dimethyltransferase from Halobacterium salinarum (strain ATCC 700922 / JCM 11081 / NRC-1) (Halobacterium halobium).